The chain runs to 177 residues: dCTP deaminase, dUMP-forming (177 aa).

Residues 98 to 103 (RSSVGR), N110, 115 to 118 (DPGF), 123 to 125 (TLE), Q144, 157 to 160 (YQGK), and Q164 each bind dCTP. E125 (proton donor/acceptor) is an active-site residue.

This sequence belongs to the dCTP deaminase family. Homotrimer. Mg(2+) is required as a cofactor.

It catalyses the reaction dCTP + 2 H2O = dUMP + NH4(+) + diphosphate. The protein operates within pyrimidine metabolism; dUMP biosynthesis; dUMP from dCTP: step 1/1. Its activity is regulated as follows. Inhibited by dTTP. Its function is as follows. Bifunctional enzyme that catalyzes both the deamination of dCTP to dUTP and the hydrolysis of dUTP to dUMP without releasing the toxic dUTP intermediate. This Halalkalibacterium halodurans (strain ATCC BAA-125 / DSM 18197 / FERM 7344 / JCM 9153 / C-125) (Bacillus halodurans) protein is dCTP deaminase, dUMP-forming.